A 383-amino-acid polypeptide reads, in one-letter code: MTSQFSTAGLTLELLRYPSQQVSNLQAWDAADEHIIKVLAEKVLEENAVPPQPCAIINDSFGALSCALTRMDSSWPLTVISDAKTSQLGALENLTRNQLDAEGIKWLTSRAPLPQDLSLVLMKLPKNLAYFAQQLRGLSQVLPQGTQVLIGAKAKSINSALITLLAEHLGPASASLAWKNTRVITCVSDGRARSLPKAITWSVPEYQLEISNLSNVFAANKLDIGARIMLENMPNGEFNTVVDLGCGNGILGLRAAGLYPKAKIHFIDDSEMAVASSQANWALNTLAPERAEFHWDDCMSHLDETVQPDLVLCNPPFHQGEAITDHIAWQMFNDAKHRLRSGGILHIVGNRHLNYHVKLKRLFGNCTTVASNGKFVILQSVKG.

It belongs to the methyltransferase superfamily. RlmG family.

It localises to the cytoplasm. The catalysed reaction is guanosine(1835) in 23S rRNA + S-adenosyl-L-methionine = N(2)-methylguanosine(1835) in 23S rRNA + S-adenosyl-L-homocysteine + H(+). Its function is as follows. Specifically methylates the guanine in position 1835 (m2G1835) of 23S rRNA. This Shewanella denitrificans (strain OS217 / ATCC BAA-1090 / DSM 15013) protein is Ribosomal RNA large subunit methyltransferase G.